Here is a 360-residue protein sequence, read N- to C-terminus: UPF0496 protein At3g19250 (360 aa).

Residues 1 to 29 (MPHCFTFKPASPEGSLGDDHLPHPSPEGS) are disordered. 2 helical membrane passes run 205–225 (HHAT…VAAS) and 229–249 (IAYH…TPYL).

It belongs to the UPF0496 family.

It localises to the membrane. This Arabidopsis thaliana (Mouse-ear cress) protein is UPF0496 protein At3g19250.